Reading from the N-terminus, the 280-residue chain is Elongation factor 1-delta (280 aa).

Ala2 carries the N-acetylalanine modification. An N6-acetyllysine modification is found at Lys17. A phosphoserine mark is found at Ser37, Ser44, Ser60, Ser86, and Ser106. Lys107 carries the post-translational modification N6-acetyllysine. Positions 113 to 171 are disordered; sequence SALEKSSPAHRATTPQTQHVSPMRQVEPPSRKAATATEDDEDDDIDLFGSDEEEDKEAT. Lys117 is subject to N6-acetyllysine; alternate. N6-succinyllysine; alternate is present on Lys117. Ser119 bears the Phosphoserine mark. Thr129 carries the phosphothreonine modification. Ser133 carries the post-translational modification Phosphoserine. Residue Thr147 is modified to Phosphothreonine. Positions 149 to 168 are enriched in acidic residues; it reads TEDDEDDDIDLFGSDEEEDK. Ser162 bears the Phosphoserine; by CK2 mark.

This sequence belongs to the EF-1-beta/EF-1-delta family. EF-1 is composed of 4 subunits: alpha, beta, delta, and gamma.

Functionally, EF-1-beta and EF-1-delta stimulate the exchange of GDP bound to EF-1-alpha to GTP. This chain is Elongation factor 1-delta (EEF1D), found in Bos taurus (Bovine).